We begin with the raw amino-acid sequence, 122 residues long: Large ribosomal subunit protein uL14 (122 aa).

The protein belongs to the universal ribosomal protein uL14 family. Part of the 50S ribosomal subunit. Forms a cluster with proteins L3 and L19. In the 70S ribosome, L14 and L19 interact and together make contacts with the 16S rRNA in bridges B5 and B8.

Binds to 23S rRNA. Forms part of two intersubunit bridges in the 70S ribosome. This is Large ribosomal subunit protein uL14 from Mycoplasma pneumoniae (strain ATCC 29342 / M129 / Subtype 1) (Mycoplasmoides pneumoniae).